The primary structure comprises 417 residues: Gamma-glutamyl phosphate reductase (417 aa).

It belongs to the gamma-glutamyl phosphate reductase family.

The protein localises to the cytoplasm. The catalysed reaction is L-glutamate 5-semialdehyde + phosphate + NADP(+) = L-glutamyl 5-phosphate + NADPH + H(+). The protein operates within amino-acid biosynthesis; L-proline biosynthesis; L-glutamate 5-semialdehyde from L-glutamate: step 2/2. Its function is as follows. Catalyzes the NADPH-dependent reduction of L-glutamate 5-phosphate into L-glutamate 5-semialdehyde and phosphate. The product spontaneously undergoes cyclization to form 1-pyrroline-5-carboxylate. This Escherichia fergusonii (strain ATCC 35469 / DSM 13698 / CCUG 18766 / IAM 14443 / JCM 21226 / LMG 7866 / NBRC 102419 / NCTC 12128 / CDC 0568-73) protein is Gamma-glutamyl phosphate reductase.